Here is a 162-residue protein sequence, read N- to C-terminus: Glycine cleavage system H protein, mitochondrial (162 aa).

Residues 1-31 (MALRIWASSTANALRLSSATRPHFSPLSRCF) constitute a mitochondrion transit peptide. The Lipoyl-binding domain maps to 53-135 (VATIGITDHA…YEDGWMIKVK (83 aa)). Lysine 94 carries the N6-lipoyllysine modification.

This sequence belongs to the GcvH family. In terms of assembly, the glycine cleavage system is composed of four proteins: P, T, L and H. (R)-lipoate serves as cofactor.

It is found in the mitochondrion. The glycine cleavage system catalyzes the degradation of glycine. The H protein shuttles the methylamine group of glycine from the P protein to the T protein. The sequence is that of Glycine cleavage system H protein, mitochondrial (GDCSH) from Flaveria pringlei.